A 269-amino-acid polypeptide reads, in one-letter code: Eukaryotic translation initiation factor 3 subunit G-1 (269 aa).

In terms of domain architecture, RRM spans 188–266; it reads AAIRISNLSE…LILSVEWSKP (79 aa).

This sequence belongs to the eIF-3 subunit G family. Component of the eukaryotic translation initiation factor 3 (eIF-3) complex. The eIF-3 complex interacts with pix.

Its subcellular location is the cytoplasm. Functionally, RNA-binding component of the eukaryotic translation initiation factor 3 (eIF-3) complex, which is involved in protein synthesis of a specialized repertoire of mRNAs and, together with other initiation factors, stimulates binding of mRNA and methionyl-tRNAi to the 40S ribosome. The eIF-3 complex specifically targets and initiates translation of a subset of mRNAs involved in cell proliferation. This subunit can bind 18S rRNA. This is Eukaryotic translation initiation factor 3 subunit G-1 from Drosophila persimilis (Fruit fly).